A 512-amino-acid polypeptide reads, in one-letter code: Dihydroniloticin synthase CYP71CD2 (512 aa).

Residues 1–21 (MNLQLDYFSITSFLVFLVVLF) form a helical membrane-spanning segment. C449 provides a ligand contact to heme.

The protein belongs to the cytochrome P450 family. It depends on heme as a cofactor.

The protein localises to the membrane. The enzyme catalyses tirucalla-7,24-dien-3beta-ol + 2 reduced [NADPH--hemoprotein reductase] + 2 O2 = dihydroniloticin + 2 oxidized [NADPH--hemoprotein reductase] + 2 H2O + 2 H(+). Its pathway is secondary metabolite biosynthesis; terpenoid biosynthesis. Its function is as follows. Monooxygenase involved in the biosynthesis of limonoids triterpene natural products such as azadirachtin, an antifeedant widely used as bioinsecticide, and possessing many medicinal applications including anti-tumoral, anti-malarial, anti-rheumatic, antibacterial, anti-inflammatory, anti-pyretic and diuretic effects. Catalyzes the conversion of tirucalladienol to dihydroniloticin. In Azadirachta indica (Neem tree), this protein is Dihydroniloticin synthase CYP71CD2.